Here is a 200-residue protein sequence, read N- to C-terminus: Large ribosomal subunit protein uL4 (200 aa).

The interval 44 to 70 is disordered; it reads AQKTRAEVTGSGKKPWRQKGTGRARSG.

Belongs to the universal ribosomal protein uL4 family. As to quaternary structure, part of the 50S ribosomal subunit.

One of the primary rRNA binding proteins, this protein initially binds near the 5'-end of the 23S rRNA. It is important during the early stages of 50S assembly. It makes multiple contacts with different domains of the 23S rRNA in the assembled 50S subunit and ribosome. Its function is as follows. Protein L4 is a both a transcriptional repressor and a translational repressor protein. It regulates transcription of the S10 operon (to which L4 belongs) by causing premature termination of transcription within the S10 leader. L4 controls the translation of the S10 operon by binding to its mRNA. In terms of biological role, this protein when expressed in E.coli represses both transcription and translation of the endogenous S10 operon. As the M.morganii S10 leader can be regulated in vitro by the E.coli L4 protein this strongly suggests the endogenous protein controls its own S10 operon in a similar fashion. Functionally, forms part of the polypeptide exit tunnel. The protein is Large ribosomal subunit protein uL4 (rplD) of Morganella morganii (Proteus morganii).